Here is a 325-residue protein sequence, read N- to C-terminus: Tetraacyldisaccharide 4'-kinase (325 aa).

55–62 contributes to the ATP binding site; it reads TAGGNGKT.

Belongs to the LpxK family.

The enzyme catalyses a lipid A disaccharide + ATP = a lipid IVA + ADP + H(+). It functions in the pathway glycolipid biosynthesis; lipid IV(A) biosynthesis; lipid IV(A) from (3R)-3-hydroxytetradecanoyl-[acyl-carrier-protein] and UDP-N-acetyl-alpha-D-glucosamine: step 6/6. In terms of biological role, transfers the gamma-phosphate of ATP to the 4'-position of a tetraacyldisaccharide 1-phosphate intermediate (termed DS-1-P) to form tetraacyldisaccharide 1,4'-bis-phosphate (lipid IVA). This is Tetraacyldisaccharide 4'-kinase from Salmonella choleraesuis (strain SC-B67).